A 499-amino-acid chain; its full sequence is Neuropeptide CCHamide-1 receptor (499 aa).

The Extracellular portion of the chain corresponds to 1 to 85 (MIANLVSMET…GRRPETYIVP (85 aa)). 2 N-linked (GlcNAc...) asparagine glycosylation sites follow: asparagine 33 and asparagine 61. A helical transmembrane segment spans residues 86 to 106 (ILFALIFVVGVLGNGTLIVVF). Residues 107-117 (LSVRQMRNVPN) lie on the Cytoplasmic side of the membrane. The chain crosses the membrane as a helical span at residues 118–138 (TYILSLALADLLVIITTVPLA). The Extracellular portion of the chain corresponds to 139 to 162 (STVYTVEYWPYGSFLCSLSEFMKD). A disulfide bond links cysteine 154 and cysteine 240. A helical transmembrane segment spans residues 163-183 (VSIGVSVFTLTALSGDRYFAI). Residues 184–203 (VDPLRKFHAHGGGRRATRMT) are Cytoplasmic-facing. The chain crosses the membrane as a helical span at residues 204–224 (LATAVSIWLLAILCGLPALIG). Over 225–259 (SNLKHLGINEKSIVICYPYPEEWGINYAKSMVLLH) the chain is Extracellular. Residues 260–280 (FLVYYAIPLVVIAVFYVLIAL) traverse the membrane as a helical segment. At 281-309 (HLMYSASVPGEIQGAVRQVRARRKVAVTV) the chain is on the cytoplasmic side. A helical membrane pass occupies residues 310 to 330 (LAFVVIFGICFLPYHVFFLWF). Residues 331–348 (YFWPTAQDDYNAFWHVLR) are Extracellular-facing. Residues 349 to 369 (IVAYCMSFANSCANPVALYFV) traverse the membrane as a helical segment. Residues 370–499 (SGAFRKHFNR…PAKFQESLLN (130 aa)) lie on the Cytoplasmic side of the membrane.

It belongs to the G-protein coupled receptor 1 family. Low levels in larval brain and gut with higher levels in adult brain and gut. In the brain expression is widely distributed, including strong expression in the mushroom bodies. Expressed weakly in s-LNv (small ventral lateral neurons) and strongly in l-LNv (large ventral lateral neurons), but not in other clock neurons.

The protein resides in the cell membrane. Functionally, receptor for the neuropeptide CCHamide-1. Plays a role in the modulation of starvation-induced olfactory behavior where starved flies show increased responsiveness to food odorants, repellants and pheromones. Contributes to regulation of sleep latency (the time required to fall asleep), amount of sleep and depth of sleep (arousability). Involved in modulation of PDP1 and PDF levels in s-LNv (small ventral lateral neurons) clock neurons in response to CCHa1 released by DN1a (anterior dorsal neurons 1) clock neurons, to regulate morning activity. In a subset of dopaminergic cells in the protocerebral anterior medial (PAM) cluster involved in suppressing arousability in response to CCHa1 secreted by gut enteroendocrine cells. This Drosophila melanogaster (Fruit fly) protein is Neuropeptide CCHamide-1 receptor.